The primary structure comprises 446 residues: uncharacterized protein (446 aa).

Helical transmembrane passes span 69 to 89 (FWLWVVAATFAFFTGFSVTYL), 98 to 118 (FFLVLAGVLGMNTLMLAVWLA), 169 to 189 (HSLWLCTLLGMLVSVLLLLLV), and 247 to 267 (GLLVGSIACYGILPRLLAWVV).

It is found in the membrane. This is an uncharacterized protein from Neisseria meningitidis serogroup B (strain ATCC BAA-335 / MC58).